A 736-amino-acid polypeptide reads, in one-letter code: Prospero homeobox protein 1 (736 aa).

Residues 103-135 (KNGGTEPSFQASGLSSTGSEVHQEDVCSNSSRD) are compositionally biased toward polar residues. The disordered stretch occupies residues 103 to 146 (KNGGTEPSFQASGLSSTGSEVHQEDVCSNSSRDSPQECLSPFGR). The Nuclear localization signal motif lies at 163–168 (RAKRAR). Disordered stretches follow at residues 180–220 (PRVA…QQQS), 261–301 (YDST…EMCE), 319–344 (EIGE…HPEG), 445–465 (NSSD…SLHQ), and 499–518 (PSAS…DLTR). The segment covering 264–274 (TDSENDEDGNL) has biased composition (acidic residues). The span at 319-335 (EIGENKPKREGPKEKDQ) shows a compositional bias: basic and acidic residues. Residues 450 to 460 (PASAPPAGGHH) show a composition bias toward low complexity. A compositionally biased stretch (basic and acidic residues) spans 505–518 (GKERASPESLDLTR). The Prospero-type homeo domain maps to 576–634 (QEGLSPNHLKKAKLMFFYTRYPSSNMLKTYFSDVKFNRCITSQLIKWFSNFREFYYIQM). A homeo-Prospero region spans residues 576-734 (QEGLSPNHLK…KSPNCLQELL (159 aa)). One can recognise a Prospero domain in the interval 635-734 (EKYARQAIND…KSPNCLQELL (100 aa)).

The protein belongs to the Prospero homeodomain family. In terms of tissue distribution, expressed most actively in the developing lens and midgut and at lower levels in the developing brain, heart, muscle and retina.

It localises to the nucleus. Transcription factor which may be involved in developmental processes such as cell fate determination, gene transcriptional regulation and progenitor cell regulation in a number of organs. May be essential in the development and function of the eye. May play a role in the regulation of the circadian rhythm by repressing the expression of clock genes. This Gallus gallus (Chicken) protein is Prospero homeobox protein 1 (PROX1).